A 215-amino-acid chain; its full sequence is S-crystallin 3 (215 aa).

Residues 2-80 (PSYTLHYFNH…YLAREFGYHG (79 aa)) form the GST N-terminal domain. Positions 82–215 (SNMEMARVDF…YLKKRCRTDF (134 aa)) constitute a GST C-terminal domain.

The protein belongs to the GST superfamily. In terms of tissue distribution, lens.

Functionally, S-crystallins are structural components of squids and octopi eye lens. Contains relatively little if any GST activity. This is S-crystallin 3 from Enteroctopus dofleini (North Pacific giant octopus).